Consider the following 332-residue polypeptide: Malate dehydrogenase, cytoplasmic (332 aa).

Residues 16 to 17, aspartate 43, and glycine 90 contribute to the NAD(+) site; that span reads QI. Arginine 99 lines the oxaloacetate pocket. NAD(+) contacts are provided by glutamine 113 and asparagine 132. Oxaloacetate contacts are provided by asparagine 132, arginine 163, histidine 188, and serine 243. Catalysis depends on histidine 188, which acts as the Proton acceptor.

It belongs to the LDH/MDH superfamily. MDH type 2 family. In terms of assembly, homodimer.

The protein localises to the cytoplasm. The catalysed reaction is (S)-malate + NAD(+) = oxaloacetate + NADH + H(+). The protein is Malate dehydrogenase, cytoplasmic (NR1) of Beta vulgaris (Sugar beet).